The primary structure comprises 51 residues: uncharacterized protein (51 aa).

This is an uncharacterized protein from Enterobacteria phage T4 (Bacteriophage T4).